The following is a 218-amino-acid chain: Small ribosomal subunit protein uS3 (218 aa).

The residue at position 1 (M1) is an N-acetylmethionine. The 73-residue stretch at 23–95 folds into the KH type-2 domain; that stretch reads LNELFTREFN…TVVLFAEKIL (73 aa).

Belongs to the universal ribosomal protein uS3 family.

This chain is Small ribosomal subunit protein uS3 (rps3), found in Dictyostelium discoideum (Social amoeba).